Reading from the N-terminus, the 920-residue chain is 2-oxoglutarate dehydrogenase E1 component (920 aa).

It belongs to the alpha-ketoglutarate dehydrogenase family. In terms of assembly, homodimer. Part of the 2-oxoglutarate dehydrogenase (OGDH) complex composed of E1 (2-oxoglutarate dehydrogenase), E2 (dihydrolipoamide succinyltransferase) and E3 (dihydrolipoamide dehydrogenase); the complex contains multiple copies of the three enzymatic components (E1, E2 and E3). Requires thiamine diphosphate as cofactor.

It carries out the reaction N(6)-[(R)-lipoyl]-L-lysyl-[protein] + 2-oxoglutarate + H(+) = N(6)-[(R)-S(8)-succinyldihydrolipoyl]-L-lysyl-[protein] + CO2. Its function is as follows. E1 component of the 2-oxoglutarate dehydrogenase (OGDH) complex which catalyzes the decarboxylation of 2-oxoglutarate, the first step in the conversion of 2-oxoglutarate to succinyl-CoA and CO(2). The protein is 2-oxoglutarate dehydrogenase E1 component of Leptospira interrogans serogroup Icterohaemorrhagiae serovar copenhageni (strain Fiocruz L1-130).